The chain runs to 374 residues: Putative glutamate--cysteine ligase 2 (374 aa).

It belongs to the glutamate--cysteine ligase type 2 family. YbdK subfamily.

It catalyses the reaction L-cysteine + L-glutamate + ATP = gamma-L-glutamyl-L-cysteine + ADP + phosphate + H(+). Its function is as follows. ATP-dependent carboxylate-amine ligase which exhibits weak glutamate--cysteine ligase activity. The protein is Putative glutamate--cysteine ligase 2 of Laribacter hongkongensis (strain HLHK9).